A 226-amino-acid polypeptide reads, in one-letter code: tRNA (guanine-N(1)-)-methyltransferase (226 aa).

S-adenosyl-L-methionine is bound by residues Gly-110 and 130-135 (IGDFIL).

This sequence belongs to the RNA methyltransferase TrmD family. As to quaternary structure, homodimer.

Its subcellular location is the cytoplasm. It catalyses the reaction guanosine(37) in tRNA + S-adenosyl-L-methionine = N(1)-methylguanosine(37) in tRNA + S-adenosyl-L-homocysteine + H(+). Specifically methylates guanosine-37 in various tRNAs. The sequence is that of tRNA (guanine-N(1)-)-methyltransferase from Nitratiruptor sp. (strain SB155-2).